The following is a 391-amino-acid chain: Elongation factor Tu (391 aa).

A tr-type G domain is found at 10-201 (KPHVNIGTIG…AVDEYIPTPA (192 aa)). The interval 19–26 (GHVDHGKT) is G1. 19–26 (GHVDHGKT) is a binding site for GTP. Mg(2+) is bound at residue T26. The tract at residues 55-59 (GITIS) is G2. A G3 region spans residues 76–79 (DCPG). GTP is bound by residues 76–80 (DCPGH) and 131–134 (NKVD). A G4 region spans residues 131–134 (NKVD). The tract at residues 169–171 (SAL) is G5.

Belongs to the TRAFAC class translation factor GTPase superfamily. Classic translation factor GTPase family. EF-Tu/EF-1A subfamily. Monomer.

It is found in the cytoplasm. It carries out the reaction GTP + H2O = GDP + phosphate + H(+). In terms of biological role, GTP hydrolase that promotes the GTP-dependent binding of aminoacyl-tRNA to the A-site of ribosomes during protein biosynthesis. The sequence is that of Elongation factor Tu from Cereibacter sphaeroides (strain ATCC 17025 / ATH 2.4.3) (Rhodobacter sphaeroides).